Reading from the N-terminus, the 426-residue chain is Serine--tRNA ligase (426 aa).

Residues 44-67 (TEKQALQSERNATSKQIGMLKKKG) form a disordered region. The span at 47-59 (QALQSERNATSKQ) shows a compositional bias: polar residues. 231 to 233 (TAE) serves as a coordination point for L-serine. ATP contacts are provided by residues 262 to 264 (RRE) and V278. Position 285 (E285) interacts with L-serine. 349 to 352 (EVSS) contacts ATP. Residue S384 participates in L-serine binding.

Belongs to the class-II aminoacyl-tRNA synthetase family. Type-1 seryl-tRNA synthetase subfamily. Homodimer. The tRNA molecule binds across the dimer.

It localises to the cytoplasm. The catalysed reaction is tRNA(Ser) + L-serine + ATP = L-seryl-tRNA(Ser) + AMP + diphosphate + H(+). The enzyme catalyses tRNA(Sec) + L-serine + ATP = L-seryl-tRNA(Sec) + AMP + diphosphate + H(+). It participates in aminoacyl-tRNA biosynthesis; selenocysteinyl-tRNA(Sec) biosynthesis; L-seryl-tRNA(Sec) from L-serine and tRNA(Sec): step 1/1. In terms of biological role, catalyzes the attachment of serine to tRNA(Ser). Is also able to aminoacylate tRNA(Sec) with serine, to form the misacylated tRNA L-seryl-tRNA(Sec), which will be further converted into selenocysteinyl-tRNA(Sec). This is Serine--tRNA ligase from Akkermansia muciniphila (strain ATCC BAA-835 / DSM 22959 / JCM 33894 / BCRC 81048 / CCUG 64013 / CIP 107961 / Muc).